Consider the following 431-residue polypeptide: MASEGSPDCCSSEPYAGASSCTTASFCPTSTTYLPSTCATSRCQTPSFLCRAHLPAGCLSPCYLTGGCNSPCLVGNCAWCEEGTFNSNEKETMQFLNDRLASYLERVRSLEENNAELECRIREQCEPDATPVCPDYQRYFDTIEELQQKILCTKAENSRLAVQVDNCKLAADDFRSKYESELSLRQLVENDISGLRGILGELTLCKSDLEAHVESLKDDLLCLKKDHEEEVNLLREQLGDRLNVELDTAPTVDLNKVLDEMRCQYERVLANNRRDAEEWFAAQTEELNQQQMSSAEQLQGCQTEMLELKRTANTLEIELQAQQTLTESLECTVAETEAQYSTQLAQMQCLIDSVEHQLAEIRCDLERQNQEYKVLLDTKARLECEINTYRGLLEKEDSRLPCNPGSTASISNSACEPCSAYVICTVENCCA.

Residues 1–89 (MASEGSPDCC…CEEGTFNSNE (89 aa)) are head. In terms of domain architecture, IF rod spans 89-400 (EKETMQFLND…GLLEKEDSRL (312 aa)). Positions 90–124 (KETMQFLNDRLASYLERVRSLEENNAELECRIREQ) are coil 1A. The interval 125-135 (CEPDATPVCPD) is linker 1. Residues 136–236 (YQRYFDTIEE…HEEEVNLLRE (101 aa)) are coil 1B. Residues 237 to 252 (QLGDRLNVELDTAPTV) are linker 12. A coil 2 region spans residues 253 to 396 (DLNKVLDEMR…NTYRGLLEKE (144 aa)). Positions 397 to 431 (DSRLPCNPGSTASISNSACEPCSAYVICTVENCCA) are tail.

Belongs to the intermediate filament family. Heterotetramer of two type I and two type II keratins.

In terms of biological role, may play a role in late hair differentiation. The chain is Keratin, type I cytoskeletal 40 (Krt40) from Rattus norvegicus (Rat).